Reading from the N-terminus, the 1111-residue chain is Serine/threonine-protein kinase Nek10 (1111 aa).

Residues 1–16 (MPDQDTKAKSTEKTAD) are compositionally biased toward basic and acidic residues. 2 disordered regions span residues 1-24 (MPDQDTKAKSTEKTADKQQGTTTR) and 47-72 (AINFDSAQNNMTKSEPTIRTGGHRAR). A compositionally biased stretch (polar residues) spans 47–63 (AINFDSAQNNMTKSEPT). Positions 481 to 514 (YKDLVSQLNLLLEDELKQIAENIESINQKKAPLK) form a coiled coil. Residues 519 to 791 (YAVLDHLGSG…MISDVMMKYL (273 aa)) enclose the Protein kinase domain. Residues 525-533 (LGSGAFGCV) and K548 contribute to the ATP site. The Proton acceptor role is filled by D655.

This sequence belongs to the protein kinase superfamily. NEK Ser/Thr protein kinase family. NIMA subfamily. In terms of assembly, interacts with RAF1 and MAP2K1; the interaction is direct with RAF1 and required for ERK1/2-signaling pathway activation in response to UV irradiation. Mg(2+) serves as cofactor. In terms of tissue distribution, expressed in the mammary gland, lung, spleen, and kidney.

It carries out the reaction L-seryl-[protein] + ATP = O-phospho-L-seryl-[protein] + ADP + H(+). It catalyses the reaction L-threonyl-[protein] + ATP = O-phospho-L-threonyl-[protein] + ADP + H(+). In terms of biological role, plays a role in the cellular response to UV irradiation. Mediates G2/M cell cycle arrest, MEK autoactivation and ERK1/2-signaling pathway activation in response to UV irradiation. In ciliated cells, it is involved in the regulation of mucociliary transport. The polypeptide is Serine/threonine-protein kinase Nek10 (Mus musculus (Mouse)).